Reading from the N-terminus, the 186-residue chain is TATA box-binding protein-like 1 (186 aa).

This sequence belongs to the TBP family.

Its subcellular location is the cytoplasm. It is found in the nucleus. Functionally, part of a specialized transcription system that mediates the transcription of most ribosomal proteins through the 5'-TCT-3' motif which is a core promoter element at these genes. Seems to also mediate the transcription of NF1. Does not bind the TATA box. Members of the TBP family are differentially required to regulate transcription and development during early embryogenesis. Particularly regulates genes that have a role in catabolism. The sequence is that of TATA box-binding protein-like 1 (tbpl1) from Xenopus tropicalis (Western clawed frog).